Consider the following 82-residue polypeptide: DNA-directed RNA polymerase subunit Rpo5 (82 aa).

The protein belongs to the archaeal Rpo5/eukaryotic RPB5 RNA polymerase subunit family. Part of the RNA polymerase complex.

The protein localises to the cytoplasm. The enzyme catalyses RNA(n) + a ribonucleoside 5'-triphosphate = RNA(n+1) + diphosphate. In terms of biological role, DNA-dependent RNA polymerase (RNAP) catalyzes the transcription of DNA into RNA using the four ribonucleoside triphosphates as substrates. This chain is DNA-directed RNA polymerase subunit Rpo5, found in Thermococcus celer.